The primary structure comprises 398 residues: Cytochrome b (398 aa).

4 helical membrane passes run 33 to 53 (FGSL…FLAM), 77 to 98 (WLIR…YLHI), 113 to 133 (WNIG…GYVL), and 178 to 198 (FFAF…IHLL). Residues His-83 and His-97 each contribute to the heme b site. Residues His-182 and His-196 each coordinate heme b. A ubiquinone is bound at residue His-201. The next 4 membrane-spanning stretches (helical) occupy residues 226–246 (YKDL…SLFA), 288–308 (LGGV…PILH), 320–340 (FTQL…WIGG), and 347–367 (YVVI…FLIP).

Belongs to the cytochrome b family. In terms of assembly, the cytochrome bc1 complex contains 3 respiratory subunits (MT-CYB, CYC1 and UQCRFS1), 2 core proteins (UQCRC1 and UQCRC2) and probably 6 low-molecular weight proteins. It depends on heme b as a cofactor.

The protein localises to the mitochondrion inner membrane. Component of the ubiquinol-cytochrome c reductase complex (complex III or cytochrome b-c1 complex) that is part of the mitochondrial respiratory chain. The b-c1 complex mediates electron transfer from ubiquinol to cytochrome c. Contributes to the generation of a proton gradient across the mitochondrial membrane that is then used for ATP synthesis. This is Cytochrome b (mt-cyb) from Channa asiatica (Small snakehead).